Here is a 349-residue protein sequence, read N- to C-terminus: Ferredoxin--NADP reductase 3 (349 aa).

The FAD site is built by Glu34, Lys42, Tyr46, Val86, Ile120, Asp287, and Ser328.

It belongs to the ferredoxin--NADP reductase type 2 family. As to quaternary structure, homodimer. FAD serves as cofactor.

It catalyses the reaction 2 reduced [2Fe-2S]-[ferredoxin] + NADP(+) + H(+) = 2 oxidized [2Fe-2S]-[ferredoxin] + NADPH. The chain is Ferredoxin--NADP reductase 3 from Lysinibacillus sphaericus (strain C3-41).